A 398-amino-acid chain; its full sequence is Peptidyl-prolyl cis-trans isomerase D (398 aa).

Positions 21–185 (FGSSPASRPG…EDVKIVDCGE (165 aa)) constitute a PPIase cyclophilin-type domain. TPR repeat units follow at residues 229–262 (GLALKNMANTQFSKANFDIALEKYSKALRYLQLH), 282–323 (TSIQ…PSTE), and 335–368 (AKAFYRRASAYVAQKDDERAEADLKHALENAPED).

This sequence belongs to the cyclophilin-type PPIase family. PPIase D subfamily.

Its subcellular location is the cytoplasm. It catalyses the reaction [protein]-peptidylproline (omega=180) = [protein]-peptidylproline (omega=0). In terms of biological role, PPIases accelerate the folding of proteins. It catalyzes the cis-trans isomerization of proline imidic peptide bonds in oligopeptides. This is Peptidyl-prolyl cis-trans isomerase D (CPR6) from Mycosarcoma maydis (Corn smut fungus).